The chain runs to 107 residues: Putidaredoxin (107 aa).

Residues 2 to 106 enclose the 2Fe-2S ferredoxin-type domain; sequence SKVVYVSHDG…GIVVDVPDRQ (105 aa). [2Fe-2S] cluster is bound by residues cysteine 40, cysteine 46, cysteine 49, and cysteine 87.

It belongs to the adrenodoxin/putidaredoxin family. Monomer. It depends on [2Fe-2S] cluster as a cofactor.

Its function is as follows. The oxidation of camphor by cytochrome P450-CAM requires the participation of a flavoprotein, putidaredoxin reductase, and an iron-sulfur protein, putidaredoxin, to mediate the transfer of electrons from NADH to P450 for oxygen activation. The polypeptide is Putidaredoxin (camB) (Pseudomonas putida (Arthrobacter siderocapsulatus)).